We begin with the raw amino-acid sequence, 264 residues long: Mitochondrial distribution and morphology protein 12 (264 aa).

The SMP-LTD domain occupies 1–232 (MSFDINWNKI…WPSWINLDFN (232 aa)). Residues 240-264 (ESSSSAEESLPHRDDAQDFSADARA) are disordered. Residues 248 to 264 (SLPHRDDAQDFSADARA) are compositionally biased toward basic and acidic residues.

This sequence belongs to the MDM12 family. In terms of assembly, component of the ER-mitochondria encounter structure (ERMES) or MDM complex, composed of MMM1, MDM10, MDM12 and MDM34. An MMM1 homodimer associates with one molecule of MDM12 on each side in a pairwise head-to-tail manner, and the SMP-LTD domains of MMM1 and MDM12 generate a continuous hydrophobic tunnel for phospholipid trafficking.

The protein resides in the mitochondrion outer membrane. Its subcellular location is the endoplasmic reticulum membrane. Its function is as follows. Component of the ERMES/MDM complex, which serves as a molecular tether to connect the endoplasmic reticulum (ER) and mitochondria. Components of this complex are involved in the control of mitochondrial shape and protein biogenesis, and function in nonvesicular lipid trafficking between the ER and mitochondria. MDM12 is required for the interaction of the ER-resident membrane protein MMM1 and the outer mitochondrial membrane-resident beta-barrel protein MDM10. The MDM12-MMM1 subcomplex functions in the major beta-barrel assembly pathway that is responsible for biogenesis of all mitochondrial outer membrane beta-barrel proteins, and acts in a late step after the SAM complex. The MDM10-MDM12-MMM1 subcomplex further acts in the TOM40-specific pathway after the action of the MDM12-MMM1 complex. Essential for establishing and maintaining the structure of mitochondria and maintenance of mtDNA nucleoids. In Eremothecium gossypii (strain ATCC 10895 / CBS 109.51 / FGSC 9923 / NRRL Y-1056) (Yeast), this protein is Mitochondrial distribution and morphology protein 12.